The primary structure comprises 434 residues: Methylenetetrahydrofolate--tRNA-(uracil-5-)-methyltransferase TrmFO (434 aa).

9 to 14 is a binding site for FAD; the sequence is GAGLAG.

The protein belongs to the MnmG family. TrmFO subfamily. It depends on FAD as a cofactor.

It is found in the cytoplasm. It carries out the reaction uridine(54) in tRNA + (6R)-5,10-methylene-5,6,7,8-tetrahydrofolate + NADH + H(+) = 5-methyluridine(54) in tRNA + (6S)-5,6,7,8-tetrahydrofolate + NAD(+). It catalyses the reaction uridine(54) in tRNA + (6R)-5,10-methylene-5,6,7,8-tetrahydrofolate + NADPH + H(+) = 5-methyluridine(54) in tRNA + (6S)-5,6,7,8-tetrahydrofolate + NADP(+). Its function is as follows. Catalyzes the folate-dependent formation of 5-methyl-uridine at position 54 (M-5-U54) in all tRNAs. The protein is Methylenetetrahydrofolate--tRNA-(uracil-5-)-methyltransferase TrmFO of Listeria innocua serovar 6a (strain ATCC BAA-680 / CLIP 11262).